A 90-amino-acid polypeptide reads, in one-letter code: WAP four-disulfide core domain protein 12 (90 aa).

A signal peptide spans 1–23 (MGSSSFLVLMVSLALVTLVAVEG). The WAP domain maps to 27 to 74 (GIEKAGVCPADNVRCFKSDPPQCHTDQDCLGERKCCYLHCGFKCVIPV). 4 disulfides stabilise this stretch: Cys34–Cys62, Cys41–Cys66, Cys49–Cys61, and Cys55–Cys70.

Its subcellular location is the secreted. Antibacterial protein. Putative acid-stable proteinase inhibitor. The polypeptide is WAP four-disulfide core domain protein 12 (WFDC12) (Pongo abelii (Sumatran orangutan)).